The sequence spans 555 residues: Probable beta-glucosidase btgE (555 aa).

The signal sequence occupies residues 1–18; sequence MRGAILATAAAFAGTAVA. 2 disordered regions span residues 92–114 and 263–290; these read TSSA…VTLP and TTSA…PTGA. A compositionally biased stretch (low complexity) spans 263-288; that stretch reads TTSAASTTTAVPSSSTTTSSATSVPT. E392 functions as the Proton donor in the catalytic mechanism. E488 acts as the Nucleophile in catalysis.

The protein belongs to the glycosyl hydrolase 17 family.

It localises to the secreted. It is found in the cell wall. It catalyses the reaction Hydrolysis of terminal, non-reducing beta-D-glucosyl residues with release of beta-D-glucose.. It functions in the pathway glycan metabolism; cellulose degradation. In terms of biological role, beta-glucosidases are one of a number of cellulolytic enzymes involved in the degradation of cellulosic biomass. Catalyzes the last step releasing glucose from the inhibitory cellobiose. The sequence is that of Probable beta-glucosidase btgE (btgE) from Emericella nidulans (strain FGSC A4 / ATCC 38163 / CBS 112.46 / NRRL 194 / M139) (Aspergillus nidulans).